The sequence spans 123 residues: Small ribosomal subunit protein uS12 (123 aa).

Position 89 is a 3-methylthioaspartic acid (D89).

The protein belongs to the universal ribosomal protein uS12 family. In terms of assembly, part of the 30S ribosomal subunit. Contacts proteins S8 and S17. May interact with IF1 in the 30S initiation complex.

With S4 and S5 plays an important role in translational accuracy. Functionally, interacts with and stabilizes bases of the 16S rRNA that are involved in tRNA selection in the A site and with the mRNA backbone. Located at the interface of the 30S and 50S subunits, it traverses the body of the 30S subunit contacting proteins on the other side and probably holding the rRNA structure together. The combined cluster of proteins S8, S12 and S17 appears to hold together the shoulder and platform of the 30S subunit. This is Small ribosomal subunit protein uS12 from Nitrobacter hamburgensis (strain DSM 10229 / NCIMB 13809 / X14).